The sequence spans 227 residues: Cytochrome c oxidase subunit 2 (227 aa).

At 1-14 (MAYSFQLGLQDATS) the chain is on the mitochondrial intermembrane side. A helical transmembrane segment spans residues 15-45 (PIMEELMNFHDHTLMIVFLISSLVLYIISLM). At 46-59 (LTTKLTHTSTMDAQ) the chain is on the mitochondrial matrix side. A helical membrane pass occupies residues 60–87 (EVETIWTILPAVILIMIALPSLRILYMM). Residues 88–227 (DEINNPVLTV…HFENWSASMI (140 aa)) are Mitochondrial intermembrane-facing. Histidine 161, cysteine 196, glutamate 198, cysteine 200, histidine 204, and methionine 207 together coordinate Cu cation. Mg(2+) is bound at residue glutamate 198.

It belongs to the cytochrome c oxidase subunit 2 family. Component of the cytochrome c oxidase (complex IV, CIV), a multisubunit enzyme composed of 14 subunits. The complex is composed of a catalytic core of 3 subunits MT-CO1, MT-CO2 and MT-CO3, encoded in the mitochondrial DNA, and 11 supernumerary subunits COX4I, COX5A, COX5B, COX6A, COX6B, COX6C, COX7A, COX7B, COX7C, COX8 and NDUFA4, which are encoded in the nuclear genome. The complex exists as a monomer or a dimer and forms supercomplexes (SCs) in the inner mitochondrial membrane with NADH-ubiquinone oxidoreductase (complex I, CI) and ubiquinol-cytochrome c oxidoreductase (cytochrome b-c1 complex, complex III, CIII), resulting in different assemblies (supercomplex SCI(1)III(2)IV(1) and megacomplex MCI(2)III(2)IV(2)). Found in a complex with TMEM177, COA6, COX18, COX20, SCO1 and SCO2. Interacts with TMEM177 in a COX20-dependent manner. Interacts with COX20. Interacts with COX16. Cu cation is required as a cofactor.

The protein resides in the mitochondrion inner membrane. The catalysed reaction is 4 Fe(II)-[cytochrome c] + O2 + 8 H(+)(in) = 4 Fe(III)-[cytochrome c] + 2 H2O + 4 H(+)(out). Component of the cytochrome c oxidase, the last enzyme in the mitochondrial electron transport chain which drives oxidative phosphorylation. The respiratory chain contains 3 multisubunit complexes succinate dehydrogenase (complex II, CII), ubiquinol-cytochrome c oxidoreductase (cytochrome b-c1 complex, complex III, CIII) and cytochrome c oxidase (complex IV, CIV), that cooperate to transfer electrons derived from NADH and succinate to molecular oxygen, creating an electrochemical gradient over the inner membrane that drives transmembrane transport and the ATP synthase. Cytochrome c oxidase is the component of the respiratory chain that catalyzes the reduction of oxygen to water. Electrons originating from reduced cytochrome c in the intermembrane space (IMS) are transferred via the dinuclear copper A center (CU(A)) of subunit 2 and heme A of subunit 1 to the active site in subunit 1, a binuclear center (BNC) formed by heme A3 and copper B (CU(B)). The BNC reduces molecular oxygen to 2 water molecules using 4 electrons from cytochrome c in the IMS and 4 protons from the mitochondrial matrix. In Praomys jacksoni (African forest rat), this protein is Cytochrome c oxidase subunit 2 (MT-CO2).